The following is a 330-amino-acid chain: Protoheme IX farnesyltransferase (330 aa).

The next 9 helical transmembrane spans lie at 33 to 53 (VMTLVVFTAFAGLIAAPVDAD), 54 to 74 (PFLAFMSILCLAVGAGAAGAL), 101 to 121 (VSNAYGFGVVASILSVLLMAL), 126 to 146 (LAAGLLAFSIFFYAVIYTMIL), 154 to 174 (IVIGGAAGAFPPMIGWVAATG), 180 to 200 (AVILFMIIFLWTPPHSWALAL), 227 to 247 (ILLYSIVLVIFAGAPVLTGLG), 250 to 270 (VYGATSLGGGALFLLLAWRIF), and 308 to 328 (VLFAALIVEHAFGAYVAIPGV).

Belongs to the UbiA prenyltransferase family. Protoheme IX farnesyltransferase subfamily. In terms of assembly, interacts with CtaA.

The protein resides in the cell inner membrane. It carries out the reaction heme b + (2E,6E)-farnesyl diphosphate + H2O = Fe(II)-heme o + diphosphate. It participates in porphyrin-containing compound metabolism; heme O biosynthesis; heme O from protoheme: step 1/1. In terms of biological role, converts heme B (protoheme IX) to heme O by substitution of the vinyl group on carbon 2 of heme B porphyrin ring with a hydroxyethyl farnesyl side group. The chain is Protoheme IX farnesyltransferase from Maricaulis maris (strain MCS10) (Caulobacter maris).